The sequence spans 493 residues: Guanosine-5'-triphosphate,3'-diphosphate pyrophosphatase (493 aa).

This sequence belongs to the GppA/Ppx family. GppA subfamily.

The enzyme catalyses guanosine 3'-diphosphate 5'-triphosphate + H2O = guanosine 3',5'-bis(diphosphate) + phosphate + H(+). It functions in the pathway purine metabolism; ppGpp biosynthesis; ppGpp from GTP: step 2/2. Its function is as follows. Catalyzes the conversion of pppGpp to ppGpp. Guanosine pentaphosphate (pppGpp) is a cytoplasmic signaling molecule which together with ppGpp controls the 'stringent response', an adaptive process that allows bacteria to respond to amino acid starvation, resulting in the coordinated regulation of numerous cellular activities. This Salmonella gallinarum (strain 287/91 / NCTC 13346) protein is Guanosine-5'-triphosphate,3'-diphosphate pyrophosphatase.